The primary structure comprises 240 residues: Tetrahydromethanopterin S-methyltransferase subunit A (240 aa).

Topologically, residues 1-218 are cytoplasmic; that stretch reads MADKREPAPG…KFHSGVHAGK (218 aa). Residue His-85 participates in 5-hydroxybenzimidazolylcob(I)amide binding. Residues 219 to 239 form a helical membrane-spanning segment; that stretch reads VEGAMIGLTITISLLGLLLLG. A topological domain (extracellular) is located at residue Arg-240.

This sequence belongs to the MtrA family. The complex is composed of 8 subunits; MtrA, MtrB, MtrC, MtrD, MtrE, MtrF, MtrG and MtrH. Requires 5-hydroxybenzimidazolylcob(I)amide as cofactor.

The protein resides in the cell membrane. The enzyme catalyses 5-methyl-5,6,7,8-tetrahydromethanopterin + coenzyme M + 2 Na(+)(in) = 5,6,7,8-tetrahydromethanopterin + methyl-coenzyme M + 2 Na(+)(out). It functions in the pathway one-carbon metabolism; methanogenesis from CO(2); methyl-coenzyme M from 5,10-methylene-5,6,7,8-tetrahydromethanopterin: step 2/2. In terms of biological role, part of a complex that catalyzes the formation of methyl-coenzyme M and tetrahydromethanopterin from coenzyme M and methyl-tetrahydromethanopterin. This is an energy-conserving, sodium-ion translocating step. The sequence is that of Tetrahydromethanopterin S-methyltransferase subunit A from Methanosarcina mazei (strain ATCC BAA-159 / DSM 3647 / Goe1 / Go1 / JCM 11833 / OCM 88) (Methanosarcina frisia).